A 483-amino-acid polypeptide reads, in one-letter code: E3 ubiquitin-protein ligase TRIM50 (483 aa).

Residues 16-57 (CPICLEVFKEPLMLQCGHSYCKDCLDNLSQHLDSELCCPVCR) form an RING-type zinc finger. The segment at 84 to 125 (IEPTVCVHHRNPLSLFCEKDQEFICGLCGLLGSHQHHRVTPV) adopts a B box-type zinc-finger fold. The Zn(2+) site is built by Cys-89, His-92, Cys-111, and His-117. Coiled-coil stretches lie at residues 127–169 (TVYS…NESD) and 203–236 (GLVA…GNES). The region spanning 275 to 474 (DIKLTVWKRL…LPMVLPPPSG (200 aa)) is the B30.2/SPRY domain. Lys-372 carries the N6-acetyllysine modification.

The protein belongs to the TRIM/RBCC family. Can form dimers and trimers. Interacts with several E2 ubiquitin-conjugating enzymes, including UBE2L6, UBE2E1, UBE2E3. No interaction with UBE2H. Interacts with BECN1. Interacts with SQSTM1. Interacts with NLRP3. In terms of processing, auto-ubiquitinated. Post-translationally, acetylated by EP300 and KAT2B. HDAC6 drives TRIM50 deacetylation. Acetylation antagonizes with TRIM50 ubiquitination. As to expression, expressed in the stomach.

The protein localises to the cytoplasm. It carries out the reaction S-ubiquitinyl-[E2 ubiquitin-conjugating enzyme]-L-cysteine + [acceptor protein]-L-lysine = [E2 ubiquitin-conjugating enzyme]-L-cysteine + N(6)-ubiquitinyl-[acceptor protein]-L-lysine.. Its function is as follows. E3 ubiquitin-protein ligase that ubiquitinates Beclin-1/BECN1 in a 'Lys-63'-dependent manner enhancing its binding to ULK1. In turn, promotes starvation-induced autophagy activation. Also interacts with p62/SQSTM1 protein and thereby induces the formation and the autophagy clearance of aggresome-associated polyubiquitinated proteins through HDAC6 interaction. Also promotes NLRP3 inflammasome activation by directly inducing NLRP3 oligomerization independent of its E3 ligase function. This is E3 ubiquitin-protein ligase TRIM50 (Trim50) from Mus musculus (Mouse).